Here is a 149-residue protein sequence, read N- to C-terminus: Large ribosomal subunit protein uL15 (149 aa).

Positions 1–11 (MSDPIKLHDLR) are enriched in basic and acidic residues. The interval 1 to 44 (MSDPIKLHDLRPAPGAKKAKTRVGRGEASKGKTAGRGTKGTKAR) is disordered.

It belongs to the universal ribosomal protein uL15 family. As to quaternary structure, part of the 50S ribosomal subunit.

Binds to the 23S rRNA. The chain is Large ribosomal subunit protein uL15 from Corynebacterium jeikeium (strain K411).